Here is a 287-residue protein sequence, read N- to C-terminus: Protease HtpX homolog (287 aa).

Transmembrane regions (helical) follow at residues 4–24 (VGLFLATNLAILLLLGLVMSL) and 35–53 (LLLMAGCFGMGGSLISLAL). H139 contributes to the Zn(2+) binding site. E140 is an active-site residue. H143 provides a ligand contact to Zn(2+). Helical transmembrane passes span 147-167 (GDMVTLSLIQGVLNTFVIFLS) and 194-214 (AVSMLLEFVFGLFASMIVMWF). E219 provides a ligand contact to Zn(2+).

Belongs to the peptidase M48B family. Zn(2+) serves as cofactor.

It is found in the cell inner membrane. The sequence is that of Protease HtpX homolog from Desulfotalea psychrophila (strain LSv54 / DSM 12343).